The following is a 215-amino-acid chain: Transcription factor LAX PANICLE 1 (215 aa).

The tract at residues 1–48 (MHDPRGFPIHPQPYHLHPTAGGLGEGRMRGGGRRRPGAKLSTDPQSVA) is disordered. The basic motif; degenerate stretch occupies residues 40-53 (LSTDPQSVAARERR). A bHLH domain is found at 40 to 89 (LSTDPQSVAARERRHRISDRFRVLRSLVPGGSKMDTVSMLEQAIHYVKFL). A helix-loop-helix motif region spans residues 54–89 (HRISDRFRVLRSLVPGGSKMDTVSMLEQAIHYVKFL).

Belongs to the bHLH protein family. In terms of assembly, efficient DNA binding requires dimerization with another bHLH protein. Interacts with LAX2. Expressed in the boundary between the shoot apical meristem (SAM) and the region of new meristem formation.

The protein localises to the nucleus. In terms of biological role, transcription factor that seems to regulate organogenesis in postembryonic development. Involved in the regulation of shoot branching by controlling axillary meristem initiation. Functions in association with LAX2 to regulate the process of AM formation. Possesses transactivation activity in yeast. This is Transcription factor LAX PANICLE 1 from Oryza sativa subsp. japonica (Rice).